Consider the following 428-residue polypeptide: Bacteriochlorophyll synthase 44.5 kDa chain (428 aa).

Transmembrane regions (helical) follow at residues 3 to 23 (LGWL…AVVV), 32 to 52 (LMVV…ALHY), 73 to 93 (FFVI…AVAV), 115 to 135 (GFGV…ATEP), 144 to 164 (ITWL…GHFL), 172 to 192 (LLWI…LAVW), 225 to 245 (AFTF…LILE), 269 to 289 (GVFF…IGSL), 291 to 311 (GWVV…VALG), 317 to 337 (ALVP…VAAI), 358 to 378 (LWGA…AGAA), and 393 to 413 (LVFG…TGVV).

This sequence belongs to the PucC family.

The protein localises to the membrane. It functions in the pathway porphyrin-containing compound metabolism; bacteriochlorophyll biosynthesis (light-independent). The protein is Bacteriochlorophyll synthase 44.5 kDa chain of Rhodobacter capsulatus (strain ATCC BAA-309 / NBRC 16581 / SB1003).